The primary structure comprises 154 residues: Urease accessory protein UreE (154 aa).

Positions 134–154 (PESGAYGKSGHNHGHSHSHED) are disordered. The span at 143-154 (GHNHGHSHSHED) shows a compositional bias: basic residues.

The protein belongs to the UreE family.

It is found in the cytoplasm. Its function is as follows. Involved in urease metallocenter assembly. Binds nickel. Probably functions as a nickel donor during metallocenter assembly. The protein is Urease accessory protein UreE of Alteromonas mediterranea (strain DSM 17117 / CIP 110805 / LMG 28347 / Deep ecotype).